The sequence spans 144 residues: Ribosomal RNA large subunit methyltransferase H (144 aa).

Residues Leu63, Gly92, and 111 to 116 (LSAMTL) contribute to the S-adenosyl-L-methionine site.

It belongs to the RNA methyltransferase RlmH family. In terms of assembly, homodimer.

The protein resides in the cytoplasm. It carries out the reaction pseudouridine(1915) in 23S rRNA + S-adenosyl-L-methionine = N(3)-methylpseudouridine(1915) in 23S rRNA + S-adenosyl-L-homocysteine + H(+). Its function is as follows. Specifically methylates the pseudouridine at position 1915 (m3Psi1915) in 23S rRNA. The sequence is that of Ribosomal RNA large subunit methyltransferase H from Prochlorococcus marinus (strain MIT 9313).